We begin with the raw amino-acid sequence, 179 residues long: Interleukin-22 (179 aa).

A signal peptide spans 1-33 (MAALQKSVSSFLMGTLATSCLLLLALLVQGGAA). Intrachain disulfides connect Cys-40–Cys-132 and Cys-89–Cys-178. Asn-54, Asn-68, and Asn-97 each carry an N-linked (GlcNAc...) asparagine glycan.

Belongs to the IL-10 family.

It is found in the secreted. Functionally, cytokine that plays a critical role in modulating tissue responses during inflammation. Plays an essential role in the regeneration of epithelial cells to maintain barrier function after injury and for the prevention of further tissue damage. Unlike most of the cytokines, has no effect on immune cells. Signals through a heterodimeric receptor composed of two subunits, the specific receptor IL22RA1 which is present on non-immune cells in many organs and the shared subunit IL10RB. Ligation of IL22RA1 with IL22 induces activation of the tyrosine kinases JAK1 and TYK2, which in turn activates STAT3. In turn, promotes cell survival and proliferation through STAT3, ERK1/2 and PI3K/AKT pathways. Promotes phosphorylation of GSK3B at 'Ser-9' and CTTN. Promotes epithelial cell spreading. This Homo sapiens (Human) protein is Interleukin-22 (IL22).